Here is a 456-residue protein sequence, read N- to C-terminus: Glycerol-3-phosphate acyltransferase 4 (456 aa).

The first 37 residues, 1 to 37, serve as a signal peptide directing secretion; sequence MFLLLPFDSLIVNLLGISLTVLFTLLLVFIIVPAIFG. 2 helical membrane passes run 156–176 and 180–200; these read ISLR…CFLL and IALA…VGYL. N-linked (GlcNAc...) asparagine glycosylation is present at Asn-247. The short motif at 248–253 is the HXXXXD motif element; it reads HTSPID. Residues Asn-327, Asn-328, and Asn-362 are each glycosylated (N-linked (GlcNAc...) asparagine).

This sequence belongs to the 1-acyl-sn-glycerol-3-phosphate acyltransferase family.

It is found in the endoplasmic reticulum membrane. The enzyme catalyses sn-glycerol 3-phosphate + an acyl-CoA = a 1-acyl-sn-glycero-3-phosphate + CoA. It carries out the reaction dodecanoyl-CoA + sn-glycerol 3-phosphate = 1-dodecanoyl-sn-glycerol 3-phosphate + CoA. It catalyses the reaction sn-glycerol 3-phosphate + hexadecanoyl-CoA = 1-hexadecanoyl-sn-glycero-3-phosphate + CoA. The catalysed reaction is sn-glycerol 3-phosphate + octadecanoyl-CoA = 1-octadecanoyl-sn-glycero-3-phosphate + CoA. The enzyme catalyses sn-glycerol 3-phosphate + (9Z)-octadecenoyl-CoA = 1-(9Z-octadecenoyl)-sn-glycero-3-phosphate + CoA. It carries out the reaction (9Z,12Z)-octadecadienoyl-CoA + sn-glycerol 3-phosphate = 1-(9Z,12Z)-octadecadienoyl-sn-glycero-3-phosphate + CoA. It functions in the pathway phospholipid metabolism; CDP-diacylglycerol biosynthesis; CDP-diacylglycerol from sn-glycerol 3-phosphate: step 1/3. Its function is as follows. Converts glycerol-3-phosphate to 1-acyl-sn-glycerol-3-phosphate (lysophosphatidic acid or LPA) by incorporating an acyl moiety at the sn-1 position of the glycerol backbone. Active against both saturated and unsaturated long-chain fatty acyl-CoAs. Protects cells against lipotoxicity. In Pongo abelii (Sumatran orangutan), this protein is Glycerol-3-phosphate acyltransferase 4.